The primary structure comprises 172 residues: VQ motif-containing protein 17 (172 aa).

A VQ motif is present at residues 51–60 (FREIVQNLTG). The interval 60–97 (GKQDHHHHDLPHQKGLKRNPRSRRSHDHHEVHDMNKSH) is disordered. The segment covering 61–71 (KQDHHHHDLPH) has biased composition (basic and acidic residues). Positions 72–85 (QKGLKRNPRSRRSH) are enriched in basic residues. A compositionally biased stretch (basic and acidic residues) spans 86-95 (DHHEVHDMNK).

The protein localises to the nucleus. May function as positive regulator of plant growth. This is VQ motif-containing protein 17 from Arabidopsis thaliana (Mouse-ear cress).